The following is a 149-amino-acid chain: D-aminoacyl-tRNA deacylase (149 aa).

The Gly-cisPro motif, important for rejection of L-amino acids motif lies at 137-138 (GP).

It belongs to the DTD family. Homodimer.

It is found in the cytoplasm. It carries out the reaction glycyl-tRNA(Ala) + H2O = tRNA(Ala) + glycine + H(+). The catalysed reaction is a D-aminoacyl-tRNA + H2O = a tRNA + a D-alpha-amino acid + H(+). An aminoacyl-tRNA editing enzyme that deacylates mischarged D-aminoacyl-tRNAs. Also deacylates mischarged glycyl-tRNA(Ala), protecting cells against glycine mischarging by AlaRS. Acts via tRNA-based rather than protein-based catalysis; rejects L-amino acids rather than detecting D-amino acids in the active site. By recycling D-aminoacyl-tRNA to D-amino acids and free tRNA molecules, this enzyme counteracts the toxicity associated with the formation of D-aminoacyl-tRNA entities in vivo and helps enforce protein L-homochirality. The protein is D-aminoacyl-tRNA deacylase of Clostridium kluyveri (strain ATCC 8527 / DSM 555 / NBRC 12016 / NCIMB 10680 / K1).